Reading from the N-terminus, the 212-residue chain is Large ribosomal subunit protein uL3 (212 aa).

A disordered region spans residues 117–142 (TSKGKGFQGNIKRHNQSRGPMTHGSR).

Belongs to the universal ribosomal protein uL3 family. In terms of assembly, part of the 50S ribosomal subunit. Forms a cluster with proteins L14 and L19.

One of the primary rRNA binding proteins, it binds directly near the 3'-end of the 23S rRNA, where it nucleates assembly of the 50S subunit. This is Large ribosomal subunit protein uL3 from Acholeplasma laidlawii (strain PG-8A).